The chain runs to 580 residues: Glypican-3 (580 aa).

An N-terminal signal peptide occupies residues 1-24 (MAGTVRTACLVVAMLLSLDFPGQA). Residue Q25 is modified to Pyrrolidone carboxylic acid. Cystine bridges form between C35-C72, C65-C262, C73-C265, C197-C349, C252-C285, C274-C422, and C278-C410. 2 N-linked (GlcNAc...) asparagine glycosylation sites follow: N124 and N241. Position 352 is a phosphoserine; by FAM20C (S352). N418 carries an N-linked (GlcNAc...) asparagine glycan. Residues S495 and S509 are each glycosylated (O-linked (Xyl...) (glycosaminoglycan) serine). Residue N554 is the site of GPI-anchor amidated asparagine attachment. Positions 555–580 (LGNVHSPLKLLTSMAISVVCFFFLVH) are cleaved as a propeptide — removed in mature form.

This sequence belongs to the glypican family. Heterodimer; disulfide-linked. Cleavage by a furin-like convertase results in production of alpha and beta chains which form a disulfide-linked heterodimer. Interacts with DPP4. Interacts with FGF2. Interacts with WNT5A. Also interacts with WNT3A and WNT7B. Interacts with hedgehog protein SHH; the heparan sulfate chains are not required for the interaction. Also interacts with hedgehog protein IHH. Interacts with CD81. Interacts with Wnt receptors FZD4, FZD7 and FZD8; the heparan sulfate chains are required for the interaction. In terms of processing, O-glycosylated; contains heparan sulfate and/or chondroitin sulfate. Post-translationally, cleaved intracellularly by a furin-like convertase to generate 2 subunits, alpha and beta, which remain associated through disulfide bonds and are associated with the cell surface via the GPI-anchor. This processing is essential for its role in inhibition of hedgehog signaling. A second proteolytic event may result in cleavage of the protein on the cell surface, separating it from the GPI-anchor and leading to its shedding from the cell surface. Detected in placenta (at protein level). Highly expressed in lung, liver and kidney.

It localises to the cell membrane. Its function is as follows. Cell surface proteoglycan. Negatively regulates the hedgehog signaling pathway when attached via the GPI-anchor to the cell surface by competing with the hedgehog receptor PTC1 for binding to hedgehog proteins. Binding to the hedgehog protein SHH triggers internalization of the complex by endocytosis and its subsequent lysosomal degradation. Positively regulates the canonical Wnt signaling pathway by binding to the Wnt receptor Frizzled and stimulating the binding of the Frizzled receptor to Wnt ligands. Positively regulates the non-canonical Wnt signaling pathway. Binds to CD81 which decreases the availability of free CD81 for binding to the transcriptional repressor HHEX, resulting in nuclear translocation of HHEX and transcriptional repression. Inhibits the dipeptidyl peptidase activity of DPP4. Plays a role in limb patterning and skeletal development by controlling the cellular response to BMP4. Modulates the effects of growth factors BMP2, BMP7 and FGF7 on renal branching morphogenesis. Required for coronary vascular development. Plays a role in regulating cell movements during gastrulation. The polypeptide is Glypican-3 (GPC3) (Homo sapiens (Human)).